A 473-amino-acid polypeptide reads, in one-letter code: Xylan O-acetyltransferase 14 (473 aa).

The segment covering 1–17 has biased composition (polar residues); that stretch reads MTTTGSTPPRKNRSNVT. The interval 1-22 is disordered; sequence MTTTGSTPPRKNRSNVTGGEGG. Residues 1-54 lie on the Cytoplasmic side of the membrane; it reads MTTTGSTPPRKNRSNVTGGEGGSLEEYAWRAAGEAAAAKKATRAWGVSVSLRSH. Residues 55-75 form a helical; Signal-anchor for type II membrane protein membrane-spanning segment; that stretch reads FSSLVLLLLLLLVALAVSATT. The segment at 76 to 101 is disordered; that stretch reads KNGDPAETPHAPPLPPPASIKLPSSS. Residues 76-473 lie on the Lumenal side of the membrane; the sequence is KNGDPAETPH…NQLLYAHIVS (398 aa). 4 disulfides stabilise this stretch: C108/C159, C130/C195, C139/C455, and C370/C451. Positions 182 to 184 match the GDS motif motif; it reads GDS. S184 acts as the Nucleophile in catalysis. Residues N209, N223, and N414 are each glycosylated (N-linked (GlcNAc...) asparagine). The Proton donor role is filled by D450. Positions 450–453 match the DXXH motif motif; the sequence is DCIH. The active-site Proton acceptor is the H453.

The protein belongs to the PC-esterase family. TBL subfamily.

The protein localises to the golgi apparatus membrane. Its function is as follows. Xylan acetyltransferase required for 2-O- and 3-O-monoacetylation of xylosyl residues in xylan. Catalyzes the 2-O-acetylation of xylan, followed by nonenzymatic acetyl migration to the O-3 position, resulting in products that are monoacetylated at both O-2 and O-3 positions. In Oryza sativa subsp. japonica (Rice), this protein is Xylan O-acetyltransferase 14.